Reading from the N-terminus, the 823-residue chain is Apoptosis-resistant E3 ubiquitin protein ligase 1 (823 aa).

A Filamin repeat occupies 52–158 (GNYLDPRSCK…VAYSPYYKIF (107 aa)). The interval 315 to 345 (PPMHMTSSQRRPSTAVDEEDEDSPSECHTPE) is disordered. The interaction with SOCS2 stretch occupies residues 483–789 (SISDWSKNFE…THSTLPTAHT (307 aa)). The HECT domain occupies 483–823 (SISDWSKNFE…SEGCEGFGML (341 aa)). Catalysis depends on Cys790, which acts as the Glycyl thioester intermediate.

Interacts with SOCS2. Interacts (via HECT domain) with HTRA2, DIABLO/SMAC and SEPTIN4; in the cytoplasm following induction of apoptosis. Post-translationally, autoubiquitinated in vitro in the presence of E2 enzyme UBE2D1/UBCH5A.

The catalysed reaction is S-ubiquitinyl-[E2 ubiquitin-conjugating enzyme]-L-cysteine + [acceptor protein]-L-lysine = [E2 ubiquitin-conjugating enzyme]-L-cysteine + N(6)-ubiquitinyl-[acceptor protein]-L-lysine.. It participates in protein modification; protein ubiquitination. E3 ubiquitin-protein ligase that catalyzes 'Lys-11'- or 'Lys-33'-linked polyubiquitin chains, with some preference for 'Lys-33' linkages. E3 ubiquitin-protein ligases accept ubiquitin from an E2 ubiquitin-conjugating enzyme in the form of a thioester and then directly transfers the ubiquitin to targeted substrates. Ubiquitinates SEPTIN4, DIABLO/SMAC and HTRA2 in vitro. Modulates pulmonary inflammation by targeting SOCS2 for ubiquitination and subsequent degradation by the proteasome. The sequence is that of Apoptosis-resistant E3 ubiquitin protein ligase 1 from Homo sapiens (Human).